A 443-amino-acid polypeptide reads, in one-letter code: UDP-N-acetylmuramate--L-alanine ligase (443 aa).

An ATP-binding site is contributed by glycine 110–serine 116.

Belongs to the MurCDEF family.

Its subcellular location is the cytoplasm. It carries out the reaction UDP-N-acetyl-alpha-D-muramate + L-alanine + ATP = UDP-N-acetyl-alpha-D-muramoyl-L-alanine + ADP + phosphate + H(+). The protein operates within cell wall biogenesis; peptidoglycan biosynthesis. Functionally, cell wall formation. This Streptococcus equi subsp. zooepidemicus (strain H70) protein is UDP-N-acetylmuramate--L-alanine ligase.